A 134-amino-acid polypeptide reads, in one-letter code: Large ribosomal subunit protein uL16c (134 aa).

Belongs to the universal ribosomal protein uL16 family. In terms of assembly, part of the 50S ribosomal subunit.

It localises to the plastid. It is found in the chloroplast. The polypeptide is Large ribosomal subunit protein uL16c (Nephroselmis olivacea (Green alga)).